We begin with the raw amino-acid sequence, 173 residues long: dCTP deaminase, dUMP-forming (173 aa).

Residues 93-98 (RSSIGR), D111, 119-121 (TLE), and Q138 each bind dCTP. Catalysis depends on E121, which acts as the Proton donor/acceptor.

The protein belongs to the dCTP deaminase family. Homotrimer.

It catalyses the reaction dCTP + 2 H2O = dUMP + NH4(+) + diphosphate. It participates in pyrimidine metabolism; dUMP biosynthesis; dUMP from dCTP: step 1/1. Its function is as follows. Bifunctional enzyme that catalyzes both the deamination of dCTP to dUTP and the hydrolysis of dUTP to dUMP without releasing the toxic dUTP intermediate. The sequence is that of dCTP deaminase, dUMP-forming from Leptospira interrogans serogroup Icterohaemorrhagiae serovar copenhageni (strain Fiocruz L1-130).